A 146-amino-acid polypeptide reads, in one-letter code: Hemoglobin subunit beta (146 aa).

V1 bears the N-acetylvaline mark. The 145-residue stretch at 2 to 146 folds into the Globin domain; sequence HLTPEEKVAV…VANALAHKYH (145 aa). Position 12 is a phosphothreonine (T12). S44 carries the post-translational modification Phosphoserine. K59 carries the post-translational modification N6-acetyllysine. Residue H63 coordinates heme b. Position 82 is an N6-acetyllysine (K82). H92 contacts heme b. C93 carries the S-nitrosocysteine modification. N6-acetyllysine is present on K144.

It belongs to the globin family. As to quaternary structure, heterotetramer of two alpha chains and two beta chains. Red blood cells.

In terms of biological role, involved in oxygen transport from the lung to the various peripheral tissues. The protein is Hemoglobin subunit beta (HBB) of Cercocebus atys (Sooty mangabey).